Reading from the N-terminus, the 893-residue chain is NEDD4-binding protein 1 (893 aa).

One can recognise a KH-like domain in the interval 59 to 143 (QEAVHSAKEY…IQQFVKLFES (85 aa)). Residues 213–243 (EYTQSAATGPSSARDEVVVQEDSRNKARTPV) form a disordered region. Polar residues predominate over residues 214-223 (YTQSAATGPS). Positions 225 to 237 (ARDEVVVQEDSRN) are enriched in basic and acidic residues. Thr-241 bears the Phosphothreonine mark. A phosphoserine mark is found at Ser-257, Ser-269, and Ser-299. Disordered stretches follow at residues 273 to 339 (DALS…DGKD), 394 to 433 (RDFP…QSHT), and 472 to 564 (IWGS…PPLP). 2 stretches are compositionally biased toward polar residues: residues 405-433 (ASQS…QSHT) and 523-537 (GFQQ…NNTK). Over residues 551–564 (QPKPNYPPLSPPLP) the composition is skewed to pro residues. Phosphoserine is present on Ser-560. One can recognise an RNase NYN domain in the interval 615–767 (LKHIVIDGSN…LGRNGPRLEE (153 aa)). Residues 793–820 (PGFRSPSTQVANNSHQPPPRIQTSSSPW) are disordered. The segment covering 797-820 (SPSTQVANNSHQPPPRIQTSSSPW) has biased composition (polar residues). The interval 846–893 (RSSAETSELREALLKIFPDSEQKLKIDQILAAHPYMKDLNALSALVLD) is coCUN.

It belongs to the N4BP1 family. As to quaternary structure, interacts with NEDD4. Interacts with ITCH (via WW domain 2). Post-translationally, proteolytically cleaved by CASP8 downstream of TLR3 or TLR4, leading to its inactivation. Mainly cleaved at Asp-488 by CASP8. Cleaved by caspase-like protein MALT1, leading to its inactivation. Mono- and polyubiquitinated on the CoCUN region. Monoubiquitinated by NEDD4. Polyubiquitinated, leading to its degradation by the proteasome. Sumoylated with SUMO1, abrogating polyubiquitination and subsequent degradation. Desumoylated by SENP1, leading to accumulation in PML nuclear bodies.

The protein resides in the cytoplasm. It localises to the cytosol. Its subcellular location is the nucleus. It is found in the nucleolus. The protein localises to the PML body. With respect to regulation, proteolytic cleavage by CASP8 or MALT1 leads to its inactivation. Potent suppressor of cytokine production that acts as a regulator of innate immune signaling and inflammation. Acts as a key negative regulator of select cytokine and chemokine responses elicited by TRIF-independent Toll-like receptors (TLRs), thereby limiting inflammatory cytokine responses to minor insults. In response to more threatening pathogens, cleaved by CASP8 downstream of TLR3 or TLR4, leading to its inactivation, thereby allowing production of inflammatory cytokines. Acts as a restriction factor against some viruses: restricts viral replication by binding to mRNA viruses and mediating their degradation via its ribonuclease activity. Also acts as an inhibitor of the E3 ubiquitin-protein ligase ITCH: acts by interacting with the second WW domain of ITCH, leading to compete with ITCH's substrates and impairing ubiquitination of substrates. The polypeptide is NEDD4-binding protein 1 (Mus musculus (Mouse)).